The chain runs to 1013 residues: MLGAVVVRVTDLNLVSVATPGRVQVWATRLGSGAPVPNVQLSALAVKYDWQDGSRVVSRRTLAPVRTDAQGLATFSLRDGEQLSVRGQVTLGGQPHSAQLGRTENELWTGVAERARALIQTDKPVYRPGETLRGFAVLRRLGAGTRLPYTGPVTVRLRAGYPDATLAQLTVKPDADGLVRFSLPLPQDVKIGGYSLEVELPAAPSASNPNPEPDVSQVPVEVRAFVKPLFTLDLSGPQEVVSGTPLTLSARGELYQGGPANVQAEAFMVDGYASDELYPDYDAGDNGLRYQDLNSDEVYGENAAPGIDPKRRPDQTLTLRGGRATLPLKLQAKNGQPTRYAVALRARDEYGRDVWARRPVTVYPAAIKFVQPRVEGAERRRVSVAVQQVGSGKALAGRRVQAEVVRVFYVTQPDGKSVRREQRISQSVLTSDAAGRVTLNVTLTPGQEGGYVARLSTQDSAGRTARASLDIGSVYKSGAERQAPTLVLSPERSRYQPGDTARLTLNTDLPVGTPLLLSVNAEDRGQVKLIQVTGPTMTLTWPVTAALGPAFSVSAVAVRGGQTAQAFSGELLVPRFDQRLDVQVTAGSEVKPGAEVTFTVRTSRGGQPASALVTLAAVHESVYAVVGDPTPNPWRFLWGATTPQFEIRSSSSQADDGRGGGGGSEAVFYRSDLREVAAFQAVRTDAQGTAKVTVRMPEGLGSYRLSARAFTRTGAAGEARGEQRVGLPFAVRLIRPRVLTAGDTGSVAVSAADRTGQGGNVTLTLGANGQTQTANSPLQGGSATRLFSIKAPQDAQALTLTASAQRGANGERDGLRETVPVRPAGARQLLSGSGSVGADKAGGNASVSLKWPQEAQPESLTLDLAATPLQLALTGLDAALADPADRWVTTDALSARLSSNLDLAALAGPFGWPEVRTRALAQARRDLASLLALRGSDGWGWTEGSPASAEMTARALDALVQAKGAGLTDAVTLQVVRQQAELLLKKSPNSPVLAAGWRGLGPPLRPCDWPAPG.

Residues 804 to 844 (AQRGANGERDGLRETVPVRPAGARQLLSGSGSVGADKAGGN) form a disordered region.

The protein belongs to the protease inhibitor I39 (alpha-2-macroglobulin) family. Bacterial alpha-2-macroglobulin subfamily.

The sequence is that of Alpha-2-macroglobulin homolog from Deinococcus radiodurans (strain ATCC 13939 / DSM 20539 / JCM 16871 / CCUG 27074 / LMG 4051 / NBRC 15346 / NCIMB 9279 / VKM B-1422 / R1).